The primary structure comprises 286 residues: Single myb histone 5 (286 aa).

Residues 1-61 form the HTH myb-type domain; sequence MGAPKQRWTS…KWRNMNVIVT (61 aa). Positions 28-57 form a DNA-binding region, H-T-H motif; it reads WRMILNDPELSSTLRYRSNVDLKDKWRNMN. One can recognise an H15 domain in the interval 122-190; the sequence is SHSRLDNIIM…KVNRKYRIAP (69 aa). Residues 229 to 277 are a coiled coil; it reads EAAAAAAAHAVAEAEAIMAEAEAAAREAEAAEAEARAAQAFAEAAVLTL.

Belongs to the histone H1/H5 family. SMH subfamily. In terms of assembly, forms a homodimer and heterodimers.

It is found in the nucleus. Its subcellular location is the chromosome. The protein localises to the nucleolus. It localises to the telomere. Its function is as follows. Binds preferentially double-stranded telomeric repeats, but may also bind to the single telomeric strand. This is Single myb histone 5 (SMH5) from Zea mays (Maize).